The following is a 312-amino-acid chain: tRNA pseudouridine synthase B (312 aa).

Asp-49 (nucleophile) is an active-site residue.

It belongs to the pseudouridine synthase TruB family. Type 1 subfamily.

It carries out the reaction uridine(55) in tRNA = pseudouridine(55) in tRNA. In terms of biological role, responsible for synthesis of pseudouridine from uracil-55 in the psi GC loop of transfer RNAs. This chain is tRNA pseudouridine synthase B, found in Chelativorans sp. (strain BNC1).